Reading from the N-terminus, the 334-residue chain is Zinc finger Ran-binding domain-containing protein 2 (334 aa).

2 consecutive RanBP2-type zinc fingers follow at residues 9–40 (SDGDWICPDKKCGNVNFARRTSCNRCGREKTT) and 65–94 (SANDWQCKTCGNVNWARRSECNMCNTPKYA). The tract at residues 117–334 (REESDGEYDE…SGSRTSSKKK (218 aa)) is disordered. Residues 150-163 (DKESEGEDEEDEDG) show a composition bias toward acidic residues. The span at 196-212 (KKKKSNRRSRSKSRSSH) shows a compositional bias: basic residues. 2 stretches are compositionally biased toward low complexity: residues 213 to 224 (SRSSSRSSSHSS) and 258 to 285 (SRSSSRSYRGSSTPRKRSYSSSRSSSSP). Positions 302-318 (RKKRRSRSRSPERRRRS) are enriched in basic residues. Residues 319-334 (SSGSSHSGSRTSSKKK) show a composition bias toward low complexity.

It belongs to the ZRANB2 family.

It is found in the nucleus. Functionally, may regulate alternative splicing by interfering with constitutive 5'-splice site selection. In Gallus gallus (Chicken), this protein is Zinc finger Ran-binding domain-containing protein 2.